Consider the following 142-residue polypeptide: Large ribosomal subunit protein uL13 (142 aa).

The protein belongs to the universal ribosomal protein uL13 family. As to quaternary structure, part of the 50S ribosomal subunit.

Functionally, this protein is one of the early assembly proteins of the 50S ribosomal subunit, although it is not seen to bind rRNA by itself. It is important during the early stages of 50S assembly. The polypeptide is Large ribosomal subunit protein uL13 (Proteus mirabilis (strain HI4320)).